Reading from the N-terminus, the 163-residue chain is Arginine repressor (163 aa).

The protein belongs to the ArgR family.

It is found in the cytoplasm. The protein operates within amino-acid biosynthesis; L-arginine biosynthesis [regulation]. Its function is as follows. Regulates arginine biosynthesis genes. This Anaeromyxobacter dehalogenans (strain 2CP-C) protein is Arginine repressor.